The sequence spans 338 residues: Large ribosomal subunit protein uL10 (338 aa).

Positions 292 to 338 (LDDDLKERVSSTASAVEAKEEEAPKEEKEEEKEEEEEAPAAGLGMLF) are disordered. The segment covering 308-318 (EAKEEEAPKEE) has biased composition (basic and acidic residues). The span at 319-329 (KEEEKEEEEEA) shows a compositional bias: acidic residues.

This sequence belongs to the universal ribosomal protein uL10 family. As to quaternary structure, part of the 50S ribosomal subunit. Forms part of the ribosomal stalk which helps the ribosome interact with GTP-bound translation factors. Forms a heptameric L10(L12)2(L12)2(L12)2 complex, where L10 forms an elongated spine to which the L12 dimers bind in a sequential fashion.

In terms of biological role, forms part of the ribosomal stalk, playing a central role in the interaction of the ribosome with GTP-bound translation factors. The protein is Large ribosomal subunit protein uL10 of Methanococcus aeolicus (strain ATCC BAA-1280 / DSM 17508 / OCM 812 / Nankai-3).